The sequence spans 603 residues: O-acetyltransferase OatA (603 aa).

The next 11 helical transmembrane spans lie at Tyr17–Leu37, Gly45–Ile65, Leu87–Pro107, Leu148–Leu168, Ile177–Phe197, Thr211–Leu231, Ile239–Phe259, Ile268–Val288, Tyr311–Gly331, Ile333–Tyr353, and Val382–Leu402. Residues Ser453, Asp575, and His578 contribute to the active site.

This sequence belongs to the acyltransferase 3 family.

The protein localises to the cell membrane. Responsible for O-acetylation at the C(6)-hydroxyl group of N-acetylmuramyl residues, forming the corresponding N,6-O-diacetylmuramic acid of the peptidoglycan. O-acetylation of the peptidoglycan is the major determinant for lysozyme resistance. This is O-acetyltransferase OatA (oatA) from Staphylococcus aureus (strain MRSA252).